Consider the following 317-residue polypeptide: Small ribosomal subunit protein uS2 (317 aa).

Ser-2 bears the N-acetylserine mark. Laminin-binding regions lie at residues 161–180 (IPCN…MLAR) and 205–229 (RDPE…EFQG). [DE]-W-[ST] repeat units follow at residues 230 to 232 (EWS), 245 to 247 (DWS), 288 to 290 (DWS), 297 to 299 (DWS), and 315 to 317 (EWS). The tract at residues 242-317 (EVPDWSEGVQ…DWGGSTAEWS (76 aa)) is laminin-binding. The segment at 278–317 (PGPTTEGYSEDWSAQPATEDWSAAPTAQAGDWGGSTAEWS) is disordered.

The protein belongs to the universal ribosomal protein uS2 family. As to quaternary structure, monomer (37LRP) and homodimer (67LR). Component of the small ribosomal subunit. Mature ribosomes consist of a small (40S) and a large (60S) subunit. The 40S subunit contains about 33 different proteins and 1 molecule of RNA (18S). The 60S subunit contains about 49 different proteins and 3 molecules of RNA (28S, 5.8S and 5S). Interacts with rps21. Interacts with several laminins including at least lamb1. Interacts with mdk. In terms of processing, acylated. Acylation may be a prerequisite for conversion of the monomeric 37 kDa laminin receptor precursor (37LRP) to the mature dimeric 67 kDa laminin receptor (67LR), and may provide a mechanism for membrane association. Cleaved by stromelysin-3 (ST3) at the cell surface. Cleavage by stromelysin-3 may be a mechanism to alter cell-extracellular matrix interactions.

The protein localises to the cell membrane. Its subcellular location is the cytoplasm. The protein resides in the nucleus. In terms of biological role, required for the assembly and/or stability of the 40S ribosomal subunit. Required for the processing of the 20S rRNA-precursor to mature 18S rRNA in a late step of the maturation of 40S ribosomal subunits. Also functions as a cell surface receptor for laminin. Plays a role in cell adhesion to the basement membrane and in the consequent activation of signaling transduction pathways. May play a role in cell fate determination and tissue morphogenesis. This is Small ribosomal subunit protein uS2 (rpsa) from Ictalurus punctatus (Channel catfish).